The sequence spans 522 residues: Secreted RxLR effector protein 105 (522 aa).

Residues 1-21 (MRGPCSVITALLVVASSQIAA) form the signal peptide. The RxLR-dEER signature appears at 48–63 (RYLRGSQHVLDSNEER).

Belongs to the RxLR effector family.

The protein localises to the secreted. Its subcellular location is the host nucleus. It is found in the host cytoplasm. Its function is as follows. Secreted effector that dos not suppress the host cell death induced by cell death-inducing proteins. The sequence is that of Secreted RxLR effector protein 105 from Plasmopara viticola (Downy mildew of grapevine).